Consider the following 203-residue polypeptide: Dephospho-CoA kinase (203 aa).

The 198-residue stretch at 6 to 203 (KVAITGGLSC…ELYQELKIYI (198 aa)) folds into the DPCK domain. 14–19 (SCGKSS) is a binding site for ATP.

This sequence belongs to the CoaE family.

The protein resides in the cytoplasm. It catalyses the reaction 3'-dephospho-CoA + ATP = ADP + CoA + H(+). Its pathway is cofactor biosynthesis; coenzyme A biosynthesis; CoA from (R)-pantothenate: step 5/5. In terms of biological role, catalyzes the phosphorylation of the 3'-hydroxyl group of dephosphocoenzyme A to form coenzyme A. In Protochlamydia amoebophila (strain UWE25), this protein is Dephospho-CoA kinase.